Here is a 113-residue protein sequence, read N- to C-terminus: U11-theraphotoxin-Hhn1d (113 aa).

The first 21 residues, 1-21, serve as a signal peptide directing secretion; that stretch reads MNTVRVTFLLVFVVAVSLGQA. Residues 22–74 constitute a propeptide that is removed on maturation; it reads DKDENRMEMKDKTEQGKSYLHFAENLLLQKLEDVEAKLLEKDSEKSINSRQKR. Cystine bridges form between Cys-75–Cys-90, Cys-82–Cys-95, and Cys-89–Cys-110.

It belongs to the neurotoxin 14 (magi-1) family. 01 (HNTX-16) subfamily. Expressed by the venom gland.

The protein localises to the secreted. Probable ion channel inhibitor. The sequence is that of U11-theraphotoxin-Hhn1d from Cyriopagopus hainanus (Chinese bird spider).